A 265-amino-acid chain; its full sequence is Apolipoprotein A-I (265 aa).

The first 16 residues, 1–16 (MKAAVLIWLFLMGSQA), serve as a signal peptide directing secretion. 2 consecutive repeat copies span residues 66–87 (LKLL…EQLG) and 88–109 (PVTQ…QEMS). The 10 X approximate tandem repeats stretch occupies residues 66-265 (LKLLDNWDSL…EEYTKKLSSQ (200 aa)). Met108 carries the methionine sulfoxide modification. Residues 110–120 (KDLEEVKAQVQ) form a 3; half-length repeat. A run of 5 repeats spans residues 121 to 142 (PYLD…QKLE), 143 to 164 (PLRT…EKLS), 165 to 186 (PLAE…TQLA), 187 to 208 (PYSD…ENSG), and 209 to 230 (ASLA…EKAK). Position 134 is a methionine sulfoxide (Met134). Residues 231-241 (PALDDLRQGLL) form a 9; half-length repeat. Copy 10 of the repeat occupies 242 to 265 (PVLESFKVSFLSALEEYTKKLSSQ).

It belongs to the apolipoprotein A1/A4/E family. In terms of assembly, homodimer. Interacts with APOA1BP and CLU. Component of a sperm activating protein complex (SPAP), consisting of APOA1, an immunoglobulin heavy chain, an immunoglobulin light chain and albumin. Interacts with NDRG1. Interacts with SCGB3A2. Interacts with NAXE and YJEFN3. Post-translationally, glycosylated. In terms of processing, palmitoylated. Phosphorylation sites are present in the extracellular medium.

Its subcellular location is the secreted. Participates in the reverse transport of cholesterol from tissues to the liver for excretion by promoting cholesterol efflux from tissues and by acting as a cofactor for the lecithin cholesterol acyltransferase (LCAT). As part of the SPAP complex, activates spermatozoa motility. This Aotus nancymaae (Ma's night monkey) protein is Apolipoprotein A-I (APOA1).